The sequence spans 376 residues: Carbamoyl phosphate synthase small chain (376 aa).

The tract at residues 1–181 is nucleophile; sequence MSKAVLVLED…VEPDGPPGVS (181 aa). A CPSase region spans residues 1-183; it reads MSKAVLVLED…PDGPPGVSRF (183 aa). 8 residues coordinate L-glutamine: serine 46, glycine 232, glycine 234, phenylalanine 261, glutamine 264, asparagine 302, glycine 304, and phenylalanine 305. Residues 184–376 enclose the Glutamine amidotransferase type-1 domain; sequence TVAALDLGIK…FVELMAGEGR (193 aa). Catalysis depends on residues histidine 350 and glutamate 352.

Belongs to the CarA family. As to quaternary structure, composed of two chains; the small (or glutamine) chain promotes the hydrolysis of glutamine to ammonia, which is used by the large (or ammonia) chain to synthesize carbamoyl phosphate. Tetramer of heterodimers (alpha,beta)4.

The catalysed reaction is hydrogencarbonate + L-glutamine + 2 ATP + H2O = carbamoyl phosphate + L-glutamate + 2 ADP + phosphate + 2 H(+). It catalyses the reaction L-glutamine + H2O = L-glutamate + NH4(+). The protein operates within amino-acid biosynthesis; L-arginine biosynthesis; carbamoyl phosphate from bicarbonate: step 1/1. Its pathway is pyrimidine metabolism; UMP biosynthesis via de novo pathway; (S)-dihydroorotate from bicarbonate: step 1/3. In terms of biological role, small subunit of the glutamine-dependent carbamoyl phosphate synthetase (CPSase). CPSase catalyzes the formation of carbamoyl phosphate from the ammonia moiety of glutamine, carbonate, and phosphate donated by ATP, constituting the first step of 2 biosynthetic pathways, one leading to arginine and/or urea and the other to pyrimidine nucleotides. The small subunit (glutamine amidotransferase) binds and cleaves glutamine to supply the large subunit with the substrate ammonia. This chain is Carbamoyl phosphate synthase small chain, found in Mycobacterium tuberculosis (strain CDC 1551 / Oshkosh).